A 455-amino-acid polypeptide reads, in one-letter code: Asparagine--tRNA ligase (455 aa).

It belongs to the class-II aminoacyl-tRNA synthetase family. As to quaternary structure, homodimer.

It is found in the cytoplasm. It catalyses the reaction tRNA(Asn) + L-asparagine + ATP = L-asparaginyl-tRNA(Asn) + AMP + diphosphate + H(+). The sequence is that of Asparagine--tRNA ligase from Mycoplasma pneumoniae (strain ATCC 29342 / M129 / Subtype 1) (Mycoplasmoides pneumoniae).